An 805-amino-acid chain; its full sequence is Muscarinic acetylcholine receptor DM1 (805 aa).

Topologically, residues 1-100 (MEPVMSLALA…GFETKGPRYS (100 aa)) are extracellular. Residues 27–43 (TSTTTTTTTTTSTTTTT) are compositionally biased toward low complexity. Residues 27-47 (TSTTTTTTTTTSTTTTTASPA) form a disordered region. 3 N-linked (GlcNAc...) asparagine glycosylation sites follow: asparagine 65, asparagine 84, and asparagine 87. Residues 101–121 (LASMVVMGFVAAILSTVTVAG) traverse the membrane as a helical segment. Residues 122 to 141 (NVMVMISFKIDKQLQTISNY) lie on the Cytoplasmic side of the membrane. A helical membrane pass occupies residues 142–162 (FLFSLAIADFAIGAISMPLFA). Residues 163–177 (VTTILGYWPLGPIVC) lie on the Extracellular side of the membrane. The helical transmembrane segment at 178–198 (DTWLALDYLASNASVLNLLII) threads the bilayer. Residues 199–220 (SFDRYFSVTRPLTYRAKRTTNR) are Cytoplasmic-facing. A helical membrane pass occupies residues 221–241 (AAVMIGAAWGISLLLWPPWIY). At 242–266 (SWPYIEGKRTVPKDECYIQFIETNQ) the chain is on the extracellular side. The chain crosses the membrane as a helical span at residues 267–287 (YITFGTALAAFYFPVTIMCFL). The Cytoplasmic portion of the chain corresponds to 288 to 718 (YWRIWRETKK…KRQESKAAKT (431 aa)). Disordered regions lie at residues 302 to 322 (LPNL…SDEN), 340 to 359 (GNDH…DAES), and 507 to 530 (GNGN…VNGN). Basic and acidic residues-rich tracts occupy residues 308-318 (GKKDSSKRSNS) and 341-353 (NDHD…RSES). A compositionally biased stretch (low complexity) spans 507 to 525 (GNGNGAINNNNNASHNGNG). A helical membrane pass occupies residues 719–739 (LSAILLSFIITWTPYNILVLI). Residues 740 to 752 (KPLTTCSDCIPTE) lie on the Extracellular side of the membrane. Residues 753–773 (LWDFFYALCYINSTINPMCYA) traverse the membrane as a helical segment. The Cytoplasmic segment spans residues 774 to 805 (LCNATFRRTYVRILTCKWHTRNREGMVRGVYN).

This sequence belongs to the G-protein coupled receptor 1 family. Muscarinic acetylcholine receptor subfamily. As to expression, intense staining in the glomeruli of the antennal lobes, the region of the nervous system containing terminals of antennal olfactory sensory neurons and mechanosensory neurons. Also a discrete group of neurosecretory cells in the pars intercerebralis of the brain.

It localises to the cell membrane. Its subcellular location is the postsynaptic cell membrane. The muscarinic acetylcholine receptor mediates various cellular responses, including inhibition of adenylate cyclase, breakdown of phosphoinositides and modulation of potassium channels through the action of G proteins. Primary transducing effect is Pi turnover. May have a role in the processing of olfactory and mechanosensory signals; regulation of neurosecretion. The chain is Muscarinic acetylcholine receptor DM1 (mAChR-A) from Drosophila melanogaster (Fruit fly).